The chain runs to 377 residues: Glutamate 5-kinase (377 aa).

ATP is bound at residue Lys-20. Substrate contacts are provided by Ser-60, Asp-147, and Asn-159. Residue 179-180 coordinates ATP; it reads SD. The region spanning 281–355 is the PUA domain; sequence HGQLHLDAGA…GQSTSDLPEF (75 aa).

Belongs to the glutamate 5-kinase family.

It is found in the cytoplasm. It carries out the reaction L-glutamate + ATP = L-glutamyl 5-phosphate + ADP. The protein operates within amino-acid biosynthesis; L-proline biosynthesis; L-glutamate 5-semialdehyde from L-glutamate: step 1/2. Its function is as follows. Catalyzes the transfer of a phosphate group to glutamate to form L-glutamate 5-phosphate. The polypeptide is Glutamate 5-kinase (Corynebacterium jeikeium (strain K411)).